A 354-amino-acid polypeptide reads, in one-letter code: DNA polymerase IV (354 aa).

The 185-residue stretch at 14-198 folds into the UmuC domain; it reads IIHIDMDAFF…MDIAKFHGVG (185 aa). Residues aspartate 18 and aspartate 116 each contribute to the Mg(2+) site. Residue glutamate 117 is part of the active site.

It belongs to the DNA polymerase type-Y family. As to quaternary structure, monomer. Mg(2+) serves as cofactor.

Its subcellular location is the cytoplasm. It catalyses the reaction DNA(n) + a 2'-deoxyribonucleoside 5'-triphosphate = DNA(n+1) + diphosphate. Poorly processive, error-prone DNA polymerase involved in untargeted mutagenesis. Copies undamaged DNA at stalled replication forks, which arise in vivo from mismatched or misaligned primer ends. These misaligned primers can be extended by PolIV. Exhibits no 3'-5' exonuclease (proofreading) activity. May be involved in translesional synthesis, in conjunction with the beta clamp from PolIII. This Streptococcus gordonii (strain Challis / ATCC 35105 / BCRC 15272 / CH1 / DL1 / V288) protein is DNA polymerase IV.